The sequence spans 99 residues: IEVLLGSDDGGLAFVPGNFSISAGEKITFKNNAGFPHNVVFDEDEIPAGVDASKISMPEEDLLNAPGETYSVTLSEKGTYSFYCSPHQGAGMVGKVTVN.

In terms of domain architecture, Plastocyanin-like spans 1–99; sequence IEVLLGSDDG…AGMVGKVTVN (99 aa). Residues histidine 37, cysteine 84, histidine 87, and methionine 92 each coordinate Cu cation.

It belongs to the plastocyanin family. It depends on Cu(2+) as a cofactor.

The protein localises to the plastid. It is found in the chloroplast thylakoid membrane. Its function is as follows. Participates in electron transfer between P700 and the cytochrome b6-f complex in photosystem I. The polypeptide is Plastocyanin (PETE) (Solanum crispum (Chilean potato-tree)).